Here is a 738-residue protein sequence, read N- to C-terminus: Photosystem I P700 chlorophyll a apoprotein A2 (738 aa).

8 helical membrane-spanning segments follow: residues 46–69 (LFSTHFGHLAIIGLWVSGNLFHIA), 135–158 (LYQGSIFMMILSAWALFAGWLHLQ), 175–199 (LNHHLAVLFGFSSIAWTGHLVHVAI), 273–291 (IAHHHLAIGVIFVIAGHMY), 333–356 (LHFQLGLALASLGVVTSLVAQHMY), 372–398 (AALYTHHQYIAIFLMCGAFAHGAIFFI), 420–442 (AIISHLSWVSLFLGFHTLGLYVH), and 521–539 (FLVHHAIALGLHTTTLILV). Residues Cys563 and Cys572 each contribute to the [4Fe-4S] cluster site. The next 2 helical transmembrane spans lie at 579 to 600 (AFYLAVFWALNTVGWVTFYWHW) and 647 to 669 (LAVWAWMFLFGHLVWATGFMFLI). Chlorophyll a contacts are provided by His658, Met666, and Tyr674. Residue Trp675 participates in phylloquinone binding. A helical transmembrane segment spans residues 711–731 (VVGLAHFTIGYILTYAAFLIA).

The protein belongs to the PsaA/PsaB family. As to quaternary structure, the PsaA/B heterodimer binds the P700 chlorophyll special pair and subsequent electron acceptors. PSI consists of a core antenna complex that captures photons, and an electron transfer chain that converts photonic excitation into a charge separation. The cyanobacterial PSI reaction center is composed of one copy each of PsaA,B,C,D,E,F,I,J,K,L,M and X, and forms trimeric complexes. Requires PSI electron transfer chain: 5 chlorophyll a, 1 chlorophyll a', 2 phylloquinones and 3 4Fe-4S clusters. PSI core antenna: 90 chlorophyll a, 22 carotenoids, 3 phospholipids and 1 galactolipid. P700 is a chlorophyll a/chlorophyll a' dimer, A0 is one or more chlorophyll a, A1 is one or both phylloquinones and FX is a shared 4Fe-4S iron-sulfur center. as cofactor.

It is found in the cellular thylakoid membrane. It carries out the reaction reduced [plastocyanin] + hnu + oxidized [2Fe-2S]-[ferredoxin] = oxidized [plastocyanin] + reduced [2Fe-2S]-[ferredoxin]. Its function is as follows. PsaA and PsaB bind P700, the primary electron donor of photosystem I (PSI), as well as the electron acceptors A0, A1 and FX. PSI is a plastocyanin/cytochrome c6-ferredoxin oxidoreductase, converting photonic excitation into a charge separation, which transfers an electron from the donor P700 chlorophyll pair to the spectroscopically characterized acceptors A0, A1, FX, FA and FB in turn. Oxidized P700 is reduced on the lumenal side of the thylakoid membrane by plastocyanin or cytochrome c6. The chain is Photosystem I P700 chlorophyll a apoprotein A2 from Synechococcus sp. (strain WH7803).